Consider the following 60-residue polypeptide: Sec-independent protein translocase protein TatA (60 aa).

The chain crosses the membrane as a helical span at residues 1–21; that stretch reads MTPAGPAQLLIVALVVIVLFG.

This sequence belongs to the TatA/E family. In terms of assembly, the Tat system comprises two distinct complexes: a TatABC complex, containing multiple copies of TatA, TatB and TatC subunits, and a separate TatA complex, containing only TatA subunits. Substrates initially bind to the TatABC complex, which probably triggers association of the separate TatA complex to form the active translocon.

It localises to the cell membrane. Its function is as follows. Part of the twin-arginine translocation (Tat) system that transports large folded proteins containing a characteristic twin-arginine motif in their signal peptide across membranes. TatA could form the protein-conducting channel of the Tat system. This is Sec-independent protein translocase protein TatA from Corynebacterium glutamicum (strain R).